The following is a 1370-amino-acid chain: Insulin-like growth factor 1 receptor (1370 aa).

An N-terminal signal peptide occupies residues 1-30 (MKSGSGGGSPTSLWGLVFLSAALSLWPTSG). C33 and C52 are oxidised to a cystine. Residues N51, N102, and N135 are each glycosylated (N-linked (GlcNAc...) asparagine). 13 cysteine pairs are disulfide-bonded: C150–C178, C182–C205, C192–C211, C215–C224, C219–C230, C231–C239, C235–C248, C251–C260, C264–C276, C282–C303, C307–C321, C324–C328, and C332–C354. N-linked (GlcNAc...) asparagine glycosylation is present at N245. N314 is a glycosylation site (N-linked (GlcNAc...) asparagine). N-linked (GlcNAc...) asparagine glycans are attached at residues N418 and N439. A disulfide bond links C456 and C489. 2 Fibronectin type-III domains span residues 490-610 (ESDV…TNAS) and 611-709 (VPSI…TEAE). 9 N-linked (GlcNAc...) asparagine glycosylation sites follow: N535, N608, N623, N641, N748, N757, N765, N901, and N914. At 742–936 (DVLQVANTTM…AKTTYENFMH (195 aa)) the chain is on the extracellular side. The Fibronectin type-III 3 domain maps to 835-928 (IPGPVTWEPR…DPVFFYVPAK (94 aa)). The helical transmembrane segment at 937–960 (LIIALPVAILLIVGGLVIMLYVFH) threads the bilayer. The Cytoplasmic portion of the chain corresponds to 961–1370 (RKRNNSRLGN…ALPLPQSSTC (410 aa)). An IRS1- and SHC1-binding motif is present at residues 978-981 (NPEY). The residue at position 981 (Y981) is a Phosphotyrosine. The region spanning 1000 to 1275 (ITMNRELGQG…SIKDEMEPSF (276 aa)) is the Protein kinase domain. ATP-binding positions include 1006–1014 (LGQGSFGMV) and K1034. Residue D1136 is the Proton acceptor of the active site. Y1162, Y1166, and Y1167 each carry phosphotyrosine; by autocatalysis. Residues K1169 and K1172 each participate in a glycyl lysine isopeptide (Lys-Gly) (interchain with G-Cter in ubiquitin) cross-link. Residue S1279 is modified to Phosphoserine; by GSK3-beta. Phosphoserine is present on S1283. The disordered stretch occupies residues 1304–1370 (NMESVPLDPS…ALPLPQSSTC (67 aa)). The span at 1305–1321 (MESVPLDPSASSASLPL) shows a compositional bias: low complexity. The segment covering 1322–1331 (PERHSGHKAE) has biased composition (basic and acidic residues).

The protein belongs to the protein kinase superfamily. Tyr protein kinase family. Insulin receptor subfamily. In terms of assembly, tetramer of 2 alpha and 2 beta chains linked by disulfide bonds. The alpha chains contribute to the formation of the ligand-binding domain, while the beta chain carries the kinase domain. Interacts with PIK3R1 and with the PTB/PID domains of IRS1 and SHC1 in vitro when autophosphorylated on tyrosine residues. Forms a hybrid receptor with INSR, the hybrid is a tetramer consisting of 1 alpha chain and 1 beta chain of INSR and 1 alpha chain and 1 beta chain of IGF1R. Interacts with ARRB1 and ARRB2. Interacts with GRB10. Interacts with RACK1. Interacts with SOCS1, SOCS2 and SOCS3. Interacts with 14-3-3 proteins. Interacts with NMD2. Interacts with MAP3K5. Interacts with STAT3. Found in a ternary complex with IGF1 and ITGAV:ITGB3 or ITGA6:ITGB4. Interacts (nascent precursor form) with ZFAND2B. Post-translationally, autophosphorylated on tyrosine residues in response to ligand binding. Autophosphorylation occurs in trans, i.e. one subunit of the dimeric receptor phosphorylates tyrosine residues on the other subunit. Autophosphorylation occurs in a sequential manner; Tyr-1166 is predominantly phosphorylated first, followed by phosphorylation of Tyr-1162 and Tyr-1167. While every single phosphorylation increases kinase activity, all three tyrosine residues in the kinase activation loop (Tyr-1162, Tyr-1166 and Tyr-1167) have to be phosphorylated for optimal activity. Can be autophosphorylated at additional tyrosine residues (in vitro). Autophosphorylated is followed by phosphorylation of juxtamembrane tyrosines and C-terminal serines. May also be phosphorylated at Tyr-1162 and Tyr-1167 by mTORC2. Phosphorylation of Tyr-981 is required for IRS1- and SHC1-binding. Phosphorylation of Ser-1279 by GSK-3beta restrains kinase activity and promotes cell surface expression, it requires a priming phosphorylation at Ser-1283. Dephosphorylated by PTPN1. Polyubiquitinated at Lys-1169 and Lys-1172 through both 'Lys-48' and 'Lys-29' linkages, promoting receptor endocytosis and subsequent degradation by the proteasome. Ubiquitination is facilitated by pre-existing phosphorylation. In terms of processing, sumoylated with SUMO1. Post-translationally, controlled by regulated intramembrane proteolysis (RIP). Undergoes metalloprotease-dependent constitutive ectodomain shedding to produce a membrane-anchored 52 kDa C-Terminal fragment which is further processed by presenilin gamma-secretase to yield an intracellular 50 kDa fragment.

Its subcellular location is the cell membrane. The catalysed reaction is L-tyrosyl-[protein] + ATP = O-phospho-L-tyrosyl-[protein] + ADP + H(+). Activated by autophosphorylation at Tyr-1162, Tyr-1166 and Tyr-1167 on the kinase activation loop; phosphorylation at all three tyrosine residues is required for optimal kinase activity. Inhibited by MSC1609119A-1, BMS-754807, PQIP, benzimidazole pyridinone, isoquinolinedione, bis-azaindole, 3-cyanoquinoline, 2,4-bis-arylamino-1,3-pyrimidine, pyrrolopyrimidine, pyrrole-5-carboxaldehyde, picropodophyllin (PPP), tyrphostin derivatives. While most inhibitors bind to the ATP binding pocket, MSC1609119A-1 functions as allosteric inhibitor and binds close to the DFG motif and the activation loop. Dephosphorylated by PTPN1. Receptor tyrosine kinase which mediates actions of insulin-like growth factor 1 (IGF1). Binds IGF1 with high affinity and IGF2 and insulin (INS) with a lower affinity. The activated IGF1R is involved in cell growth and survival control. IGF1R is crucial for tumor transformation and survival of malignant cell. Ligand binding activates the receptor kinase, leading to receptor autophosphorylation, and tyrosines phosphorylation of multiple substrates, that function as signaling adapter proteins including, the insulin-receptor substrates (IRS1/2), Shc and 14-3-3 proteins. Phosphorylation of IRSs proteins lead to the activation of two main signaling pathways: the PI3K-AKT/PKB pathway and the Ras-MAPK pathway. The result of activating the MAPK pathway is increased cellular proliferation, whereas activating the PI3K pathway inhibits apoptosis and stimulates protein synthesis. Phosphorylated IRS1 can activate the 85 kDa regulatory subunit of PI3K (PIK3R1), leading to activation of several downstream substrates, including protein AKT/PKB. AKT phosphorylation, in turn, enhances protein synthesis through mTOR activation and triggers the antiapoptotic effects of IGFIR through phosphorylation and inactivation of BAD. In parallel to PI3K-driven signaling, recruitment of Grb2/SOS by phosphorylated IRS1 or Shc leads to recruitment of Ras and activation of the ras-MAPK pathway. In addition to these two main signaling pathways IGF1R signals also through the Janus kinase/signal transducer and activator of transcription pathway (JAK/STAT). Phosphorylation of JAK proteins can lead to phosphorylation/activation of signal transducers and activators of transcription (STAT) proteins. In particular activation of STAT3, may be essential for the transforming activity of IGF1R. The JAK/STAT pathway activates gene transcription and may be responsible for the transforming activity. JNK kinases can also be activated by the IGF1R. IGF1 exerts inhibiting activities on JNK activation via phosphorylation and inhibition of MAP3K5/ASK1, which is able to directly associate with the IGF1R. When present in a hybrid receptor with INSR, binds IGF1. The sequence is that of Insulin-like growth factor 1 receptor (Igf1r) from Rattus norvegicus (Rat).